Reading from the N-terminus, the 90-residue chain is Putative regulatory protein cce_4590 (90 aa).

This sequence belongs to the RemA family.

The sequence is that of Putative regulatory protein cce_4590 from Crocosphaera subtropica (strain ATCC 51142 / BH68) (Cyanothece sp. (strain ATCC 51142)).